We begin with the raw amino-acid sequence, 469 residues long: GDP-fucose protein O-fucosyltransferase 2 (469 aa).

An N-terminal signal peptide occupies residues 1 to 18 (MKFIIVLLLFFFFKVIDR). Residues 56–60 (GEGFN), 277–279 (HLR), and 373–374 (RF) contribute to the GDP-beta-L-fucose site. The active-site Proton acceptor is glutamate 57.

It belongs to the glycosyltransferase 68 family.

Its subcellular location is the endoplasmic reticulum. It catalyses the reaction L-seryl-[protein] + GDP-beta-L-fucose = 3-O-(alpha-L-fucosyl)-L-seryl-[protein] + GDP + H(+). The catalysed reaction is L-threonyl-[protein] + GDP-beta-L-fucose = 3-O-(alpha-L-fucosyl)-L-threonyl-[protein] + GDP + H(+). The protein operates within protein modification; protein glycosylation. Catalyzes the reaction that attaches fucose through an O-glycosidic linkage to a conserved serine or threonine residue in the consensus sequence C1-X-X-S/T-C2 of thrombospondin type I repeats (TSRs) where C1 and C2 are the first and second cysteines of the repeat, respectively. O-fucosylates sporozoite proteins CSP and TRAP. O-fucosylation regulates stability and intracellular trafficking of TRAP but not of CSP. Probably by regulating protein O-fucosylation, may play a role in parasite transmission to the mosquito vector and/or infection of the vertebrate host hepatocytes; however, POFUT2 involvement in transmission/infection is controversial. The sequence is that of GDP-fucose protein O-fucosyltransferase 2 from Plasmodium falciparum (isolate NF54).